Here is a 414-residue protein sequence, read N- to C-terminus: COUP transcription factor 2 (414 aa).

Residues 1–72 (MAMVVSTWRD…PGGPGSDKQQ (72 aa)) form a disordered region. A compositionally biased stretch (pro residues) spans 27 to 37 (PPVPGPPPGAP). Residues 38–54 (HTPQTPGQGGPASTPAQ) show a composition bias toward low complexity. Thr-51 bears the Phosphothreonine mark. Positions 76–151 (HIECVVCGDK…VGMRREAVQR (76 aa)) form a DNA-binding region, nuclear receptor. 2 consecutive NR C4-type zinc fingers follow at residues 79–99 (CVVC…CEGC) and 115–139 (CRAN…LKKC). Residues 117–414 (ANRNCPIDQH…SFNWPYMAIQ (298 aa)) form an interaction with ZFPM2 region. Positions 177–403 (YLSGYISLLL…TLIRDMLLSG (227 aa)) constitute an NR LBD domain. Residues 337–414 (LQEKSQCALE…SFNWPYMAIQ (78 aa)) are important for dimerization.

Belongs to the nuclear hormone receptor family. NR2 subfamily. In terms of assembly, interacts with SQSTM1. Binds DNA as a dimer; homodimer or heterodimer with NR2F6. Interacts with NCOA1, NCOA2, NCOA3 and PPARGC1A. Interacts with ZFPM2.

Its subcellular location is the nucleus. In terms of biological role, ligand-activated transcription factor. Activated by high concentrations of 9-cis-retinoic acid and all-trans-retinoic acid, but not by dexamethasone, cortisol or progesterone (in vitro). Regulation of the apolipoprotein A-I gene transcription. Binds to DNA site A. May be required to establish ovary identity during early gonad development. The protein is COUP transcription factor 2 (Nr2f2) of Rattus norvegicus (Rat).